Reading from the N-terminus, the 191-residue chain is Large ribosomal subunit protein uL3 (191 aa).

The tract at residues 119–138 is disordered; sequence AAHGSRFHRRPGSIGNREWP.

The protein belongs to the universal ribosomal protein uL3 family. As to quaternary structure, part of the 50S ribosomal subunit. Forms a cluster with proteins L14 and L19.

Functionally, one of the primary rRNA binding proteins, it binds directly near the 3'-end of the 23S rRNA, where it nucleates assembly of the 50S subunit. In Helicobacter pylori (strain ATCC 700392 / 26695) (Campylobacter pylori), this protein is Large ribosomal subunit protein uL3 (rplC).